The chain runs to 623 residues: Glutathione import ATP-binding protein GsiA (623 aa).

ABC transporter domains lie at 15 to 269 (VENL…RALL) and 314 to 564 (LRVR…RKLL). ATP is bound by residues 49–56 (GESGSGKS) and 357–364 (GESGSGKS).

The protein belongs to the ABC transporter superfamily. Glutathione importer (TC 3.A.1.5.11) family. In terms of assembly, the complex is composed of two ATP-binding proteins (GsiA), two transmembrane proteins (GsiC and GsiD) and a solute-binding protein (GsiB).

The protein localises to the cell inner membrane. The catalysed reaction is glutathione(out) + ATP + H2O = glutathione(in) + ADP + phosphate + H(+). Its function is as follows. Part of the ABC transporter complex GsiABCD involved in glutathione import. Responsible for energy coupling to the transport system. The chain is Glutathione import ATP-binding protein GsiA from Shigella flexneri serotype 5b (strain 8401).